A 461-amino-acid polypeptide reads, in one-letter code: tRNA modification GTPase MnmE (461 aa).

(6S)-5-formyl-5,6,7,8-tetrahydrofolate is bound by residues Arg-23, Glu-88, and Arg-127. The TrmE-type G domain maps to 223-383 (GLNTVIVGKP…LKECIKNLFF (161 aa)). Asn-233 contributes to the K(+) binding site. GTP-binding positions include 233 to 238 (NVGKSS), 252 to 258 (TEIPGTT), and 277 to 280 (DTAG). Ser-237 contacts Mg(2+). Residues Thr-252, Ile-254, and Thr-257 each contribute to the K(+) site. Mg(2+) is bound at residue Thr-258. Lys-461 contributes to the (6S)-5-formyl-5,6,7,8-tetrahydrofolate binding site.

The protein belongs to the TRAFAC class TrmE-Era-EngA-EngB-Septin-like GTPase superfamily. TrmE GTPase family. In terms of assembly, homodimer. Heterotetramer of two MnmE and two MnmG subunits. The cofactor is K(+).

The protein resides in the cytoplasm. Its function is as follows. Exhibits a very high intrinsic GTPase hydrolysis rate. Involved in the addition of a carboxymethylaminomethyl (cmnm) group at the wobble position (U34) of certain tRNAs, forming tRNA-cmnm(5)s(2)U34. The polypeptide is tRNA modification GTPase MnmE (Clostridium botulinum (strain Loch Maree / Type A3)).